A 457-amino-acid chain; its full sequence is Argininosuccinate lyase (457 aa).

Belongs to the lyase 1 family. Argininosuccinate lyase subfamily.

Its subcellular location is the cytoplasm. The enzyme catalyses 2-(N(omega)-L-arginino)succinate = fumarate + L-arginine. Its pathway is amino-acid biosynthesis; L-arginine biosynthesis; L-arginine from L-ornithine and carbamoyl phosphate: step 3/3. The chain is Argininosuccinate lyase from Aquifex aeolicus (strain VF5).